The sequence spans 361 residues: MARELFRTPIWRLDKFIEDQLLPDTTFLTELRADIDSISAFLMERCFQGAAHPVRVSRVVMGGCYNEYTVLKGRSEANMVVFLINLTSFEDQFNGQVVFIEEIWRHLLQLQQEKLCKLKFEVQSPKEPNSRFLSFKLSCPERQHELEFDVQPAYDALYEVRHFKPFDSSNYNKVYAQLTHECTTLEKEGEFSICFTDLHQSFLRYRAPKLWNLIRLVKHWYQLCKEKLRGPLPPQYALELLTVYVWEYGIHENPGLHTAQCFRTVLELVTKYKRLRIYWTWCYDFQHEISDYLQGQIKKARPLILDPADPTRNVAGSDLQAWDLLAKEAQIWIDSTFFTNHDMSIVEAWEVMPERQECVFL.

It belongs to the 2-5A synthase family. As to quaternary structure, interacts with OAS1A, the interaction inhibits OAS1A catalytic activity. Expressed specifically in oocytes (at protein level). Expressed at highest level in ovary with lesser amounts in intestine, brain, thymus lung, kidney, liver and uterus.

It localises to the cytoplasm. Functionally, does not have 2'-5'-oligoadenylate synthetase activity, but can bind double-stranded RNA. May play a role in the control of female fertility, possibly by binding to and inhibiting OAS1A. This Mus musculus (Mouse) protein is Inactive 2'-5'-oligoadenylate synthase 1D.